The chain runs to 259 residues: Small ribosomal subunit protein eS4 (259 aa).

Residues 41–105 enclose the S4 RNA-binding domain; it reads LPLSVLLKER…TDQSFRILYD (65 aa). Thr248 carries the phosphothreonine modification. Phosphoserine is present on Ser258.

Belongs to the eukaryotic ribosomal protein eS4 family.

This is Small ribosomal subunit protein eS4 from Tetrahymena thermophila.